Consider the following 234-residue polypeptide: Matrix protein 1 (234 aa).

Residues M1–M103 form a disordered region. Residues C76–L96 show a composition bias toward basic and acidic residues. A coiled-coil region spans residues P183 to Q234.

As to quaternary structure, interacts with host HSC70.

The protein localises to the virion. It localises to the host cytoplasm. Its subcellular location is the host nucleus. Its function is as follows. May play a role in virus replication, from virus entry and uncoating to assembly and budding of the virus particle. Interaction of viral NEP with M1-Hsc70 is thought to promote nuclear export of the viral encapsidated genomes. This is Matrix protein 1 from Infectious salmon anemia virus (isolate Atlantic salmon/Norway/810/9/99) (ISAV).